We begin with the raw amino-acid sequence, 111 residues long: BET1-like protein (111 aa).

The Cytoplasmic portion of the chain corresponds to 1–86; sequence MADWTRAQSS…MARSGRDNRK (86 aa). A phosphoserine mark is found at Ser9 and Ser37. One can recognise a t-SNARE coiled-coil homology domain in the interval 15–77; it reads DILDRENKRM…TGSVKRFSTM (63 aa). The helical; Anchor for type IV membrane protein transmembrane segment at 87 to 107 threads the bilayer; sequence LLCGMAVVLIVAFFILSYLLS. Over 108–111 the chain is Lumenal; that stretch reads RTRT.

In terms of assembly, component of a SNARE complex consisting of STX5, YKT6, GOSR1 and BET1L. Interacts with STX5.

It localises to the golgi apparatus membrane. The protein resides in the golgi apparatus. The protein localises to the trans-Golgi network membrane. In terms of biological role, vesicle SNARE required for targeting and fusion of retrograde transport vesicles with the Golgi complex. Required for the integrity of the Golgi complex. The sequence is that of BET1-like protein from Mus musculus (Mouse).